Reading from the N-terminus, the 632-residue chain is uncharacterized protein (632 aa).

The protein belongs to the MG032/MG096/MG288 family.

This is an uncharacterized protein from Mycoplasma pneumoniae (strain ATCC 29342 / M129 / Subtype 1) (Mycoplasmoides pneumoniae).